Here is a 198-residue protein sequence, read N- to C-terminus: Small ribosomal subunit protein uS4z (198 aa).

S68 carries the post-translational modification Phosphoserine. One can recognise an S4 RNA-binding domain in the interval 109-180 (RRLQTIVFKS…PGRVKRRNEK (72 aa)). Positions 163–198 (TSPFGGGRPGRVKRRNEKSASKKASGGGDADGDDEE) are disordered.

This sequence belongs to the universal ribosomal protein uS4 family. In terms of assembly, binds to the translation initiation factors TIF3E1.

This Arabidopsis thaliana (Mouse-ear cress) protein is Small ribosomal subunit protein uS4z (RPS9B).